Reading from the N-terminus, the 498-residue chain is Phosphatidylserine synthase (498 aa).

The tract at residues M1–R65 is disordered. The Cytoplasmic segment spans residues M1–Y92. Positions S7–S25 are enriched in polar residues. The helical transmembrane segment at K93–V113 threads the bilayer. At R114 to N122 the chain is on the lumenal side. Residues L123–P143 traverse the membrane as a helical segment. Topologically, residues N144 to A153 are cytoplasmic. Residues V154–F174 form a helical membrane-spanning segment. Residues Q175–M239 are Lumenal-facing. A glycan (N-linked (GlcNAc...) asparagine) is linked at N205. Residues G240–L260 form a helical membrane-spanning segment. Topologically, residues P261–C266 are cytoplasmic. The chain crosses the membrane as a helical span at residues W267–L287. Over K288 to R339 the chain is Lumenal. The chain crosses the membrane as a helical span at residues F340 to L360. Residues K361 to P367 lie on the Cytoplasmic side of the membrane. The chain crosses the membrane as a helical span at residues P368 to V388. Topologically, residues R389–R402 are lumenal. Residues V403–K423 traverse the membrane as a helical segment. The Cytoplasmic segment spans residues N424–N436. Residues I437–Y457 traverse the membrane as a helical segment. The Lumenal portion of the chain corresponds to W458–K498. A disordered region spans residues K465 to K498. Residues P478 to S490 show a composition bias toward low complexity.

This sequence belongs to the phosphatidyl serine synthase family.

Its subcellular location is the endoplasmic reticulum membrane. It catalyses the reaction a 1,2-diacyl-sn-glycero-3-phosphoethanolamine + L-serine = a 1,2-diacyl-sn-glycero-3-phospho-L-serine + ethanolamine. It participates in phospholipid metabolism; phosphatidylserine biosynthesis. In terms of biological role, catalyzes a base-exchange reaction in which the polar head group of phosphatidylethanolamine (PE) is replaced by L-serine. The protein is Phosphatidylserine synthase of Drosophila melanogaster (Fruit fly).